The primary structure comprises 137 residues: Lysozyme (137 aa).

The first 20 residues, 1 to 20, serve as a signal peptide directing secretion; that stretch reads MQRLLGSIVILATVFTFCEA. The 115-residue stretch at 21–135 folds into the I-type lysozyme domain; the sequence is TISSACLRCI…EKVHQQGCNV (115 aa). 6 cysteine pairs are disulfide-bonded: C26-C102, C31-C37, C42-C51, C64-C84, C74-C80, and C98-C116. E34 acts as the Proton donor in catalysis. D45 acts as the Nucleophile in catalysis. Substrate is bound at residue 57–63; sequence KENYWED. Residues Y88 and 109-111 each bind substrate; that span reads HNG.

This sequence belongs to the glycosyl hydrolase 22 family. Type-I lysozyme subfamily. In terms of tissue distribution, expressed in the basophil cells of the oyster digestive gland.

It is found in the secreted. It carries out the reaction Hydrolysis of (1-&gt;4)-beta-linkages between N-acetylmuramic acid and N-acetyl-D-glucosamine residues in a peptidoglycan and between N-acetyl-D-glucosamine residues in chitodextrins.. Has bacteriolytic activity. May play a role in digestion and in the host defense mechanisms against invading microbes. The polypeptide is Lysozyme (lysoz) (Magallana gigas (Pacific oyster)).